Here is a 114-residue protein sequence, read N- to C-terminus: MVSKGKTVKDPGIPNITIPEKVCEDEDCPYHGSLRVRGITLEGVIVKYRGTKAAVIERQYLYYDSKYKRYERRRSRIHAHVPPCINVREGDKVIIGECRPLSKSISFVVLGKVS.

It belongs to the universal ribosomal protein uS17 family. Part of the 30S ribosomal subunit.

One of the primary rRNA binding proteins, it binds specifically to the 5'-end of 16S ribosomal RNA. The chain is Small ribosomal subunit protein uS17 from Saccharolobus solfataricus (strain ATCC 35092 / DSM 1617 / JCM 11322 / P2) (Sulfolobus solfataricus).